A 134-amino-acid chain; its full sequence is D-ribose pyranase (134 aa).

His-20 acts as the Proton donor in catalysis. Substrate contacts are provided by residues Asp-28, His-99, and 123–125 (FSN).

This sequence belongs to the RbsD / FucU family. RbsD subfamily. As to quaternary structure, homodecamer.

The protein resides in the cytoplasm. The enzyme catalyses beta-D-ribopyranose = beta-D-ribofuranose. The protein operates within carbohydrate metabolism; D-ribose degradation; D-ribose 5-phosphate from beta-D-ribopyranose: step 1/2. Catalyzes the interconversion of beta-pyran and beta-furan forms of D-ribose. The sequence is that of D-ribose pyranase from Staphylococcus epidermidis (strain ATCC 12228 / FDA PCI 1200).